The sequence spans 184 residues: Oligoribonuclease (184 aa).

Residues 9–172 form the Exonuclease domain; it reads LIWIDLEMTG…DDIRESIEEL (164 aa). Tyr130 is an active-site residue.

This sequence belongs to the oligoribonuclease family.

Its subcellular location is the cytoplasm. Functionally, 3'-to-5' exoribonuclease specific for small oligoribonucleotides. This chain is Oligoribonuclease, found in Actinobacillus pleuropneumoniae serotype 5b (strain L20).